Consider the following 275-residue polypeptide: Large ribosomal subunit protein uL2c (275 aa).

2 disordered regions span residues Pro-29–Arg-60 and Met-225–His-252. Residues Ser-51 to Arg-60 show a composition bias toward basic residues.

It belongs to the universal ribosomal protein uL2 family. As to quaternary structure, part of the 50S ribosomal subunit.

It localises to the plastid. The protein resides in the chloroplast. The chain is Large ribosomal subunit protein uL2c (rpl2) from Chlorokybus atmophyticus (Soil alga).